Here is a 194-residue protein sequence, read N- to C-terminus: Fe/S biogenesis protein NfuA (194 aa).

[4Fe-4S] cluster contacts are provided by Cys-152 and Cys-155.

This sequence belongs to the NfuA family. Homodimer. [4Fe-4S] cluster serves as cofactor.

In terms of biological role, involved in iron-sulfur cluster biogenesis. Binds a 4Fe-4S cluster, can transfer this cluster to apoproteins, and thereby intervenes in the maturation of Fe/S proteins. Could also act as a scaffold/chaperone for damaged Fe/S proteins. This Pseudomonas aeruginosa (strain LESB58) protein is Fe/S biogenesis protein NfuA.